A 246-amino-acid polypeptide reads, in one-letter code: Ubiquinone biosynthesis O-methyltransferase (246 aa).

Residues R44, G63, D84, and M128 each contribute to the S-adenosyl-L-methionine site.

This sequence belongs to the methyltransferase superfamily. UbiG/COQ3 family.

It carries out the reaction a 3-demethylubiquinol + S-adenosyl-L-methionine = a ubiquinol + S-adenosyl-L-homocysteine + H(+). It catalyses the reaction a 3-(all-trans-polyprenyl)benzene-1,2-diol + S-adenosyl-L-methionine = a 2-methoxy-6-(all-trans-polyprenyl)phenol + S-adenosyl-L-homocysteine + H(+). It participates in cofactor biosynthesis; ubiquinone biosynthesis. Its function is as follows. O-methyltransferase that catalyzes the 2 O-methylation steps in the ubiquinone biosynthetic pathway. In Xylella fastidiosa (strain 9a5c), this protein is Ubiquinone biosynthesis O-methyltransferase.